Consider the following 108-residue polypeptide: Cytochrome c (108 aa).

4 residues coordinate heme c: Cys19, Cys22, His23, and Met85.

It belongs to the cytochrome c family. In terms of processing, binds 1 heme c group covalently per subunit.

The protein resides in the mitochondrion intermembrane space. Electron carrier protein. The oxidized form of the cytochrome c heme group can accept an electron from the heme group of the cytochrome c1 subunit of cytochrome reductase. Cytochrome c then transfers this electron to the cytochrome oxidase complex, the final protein carrier in the mitochondrial electron-transport chain. This chain is Cytochrome c, found in Stellaria longipes (Longstalk starwort).